Here is a 594-residue protein sequence, read N- to C-terminus: UvrABC system protein C (594 aa).

The GIY-YIG domain occupies 14–91 (DQPGCYLMKD…IKKYDPKYNI (78 aa)). The UVR domain occupies 196–231 (KEVRSELEIKMYEASEKLEFERAKELRDQIAHIDAI).

Belongs to the UvrC family. Interacts with UvrB in an incision complex.

The protein localises to the cytoplasm. In terms of biological role, the UvrABC repair system catalyzes the recognition and processing of DNA lesions. UvrC both incises the 5' and 3' sides of the lesion. The N-terminal half is responsible for the 3' incision and the C-terminal half is responsible for the 5' incision. This Bacillus cereus (strain B4264) protein is UvrABC system protein C.